Consider the following 150-residue polypeptide: Myeloid-derived growth factor homolog (150 aa).

Residues 1 to 22 (MTFLKYLLILCTIFLMVTNSLS) form the signal peptide.

It belongs to the MYDGF family.

It localises to the secreted. The chain is Myeloid-derived growth factor homolog from Dictyostelium discoideum (Social amoeba).